Consider the following 475-residue polypeptide: Ammonium transporter 2 (475 aa).

11 consecutive transmembrane segments (helical) span residues 27–47 (AATL…ASIV), 55–75 (SAFM…LLCY), 120–140 (LVYF…GSVL), 148–168 (WMAF…YSIW), 183–203 (GGYV…YWVG), 218–238 (VLLM…FNGG), 254–274 (TNLS…IFFG), 279–299 (IGAI…AGLI), 302–322 (WAAI…MMII), 336–356 (LAVF…TGLF), and 389–409 (AGAA…LLAI).

The protein belongs to the ammonia transporter channel (TC 1.A.11.2) family. Higher expression in shoots than roots.

It is found in the cell membrane. Its function is as follows. High affinity ammonium transporter that may play an important role in moving ammonium between the apoplast and symplast of cells throughout the plant. Does not transport methylammonium. The polypeptide is Ammonium transporter 2 (AMT2) (Arabidopsis thaliana (Mouse-ear cress)).